The following is a 236-amino-acid chain: Purine nucleoside phosphorylase DeoD-type (236 aa).

An a purine D-ribonucleoside-binding site is contributed by His5. Residues Gly21, Arg25, Arg44, and 88-91 (RIGS) contribute to the phosphate site. A purine D-ribonucleoside-binding positions include 180–182 (EME) and 204–205 (SD). Residue Asp205 is the Proton donor of the active site.

The protein belongs to the PNP/UDP phosphorylase family. As to quaternary structure, homohexamer; trimer of homodimers.

It catalyses the reaction a purine D-ribonucleoside + phosphate = a purine nucleobase + alpha-D-ribose 1-phosphate. It carries out the reaction a purine 2'-deoxy-D-ribonucleoside + phosphate = a purine nucleobase + 2-deoxy-alpha-D-ribose 1-phosphate. In terms of biological role, catalyzes the reversible phosphorolytic breakdown of the N-glycosidic bond in the beta-(deoxy)ribonucleoside molecules, with the formation of the corresponding free purine bases and pentose-1-phosphate. In Tolumonas auensis (strain DSM 9187 / NBRC 110442 / TA 4), this protein is Purine nucleoside phosphorylase DeoD-type.